Here is a 194-residue protein sequence, read N- to C-terminus: MKKLFLIIGAPGSGKTTDAEIIAKKHSDLIAHYSTGDLLREEVKKGTPLGATIASFIDNGQLVPLEIVMDTIKNAILNSDKEVIIIDGFPRSVEQMEALDKMLQENPSIKLEAVIEVVVSEETARERVLGRARGADDNVEVFNNRMKLYLEPLNQIEEFYEKKGLLKKIDGERTIEEIVADMESFILQKIDENA.

Residue 12–17 participates in ATP binding; that stretch reads GSGKTT. An NMP region spans residues 34-63; it reads STGDLLREEVKKGTPLGATIASFIDNGQLV. Residues Thr-35, Arg-40, 61–63, 88–91, and Gln-95 each bind AMP; these read QLV and GFPR. The segment at 130–136 is LID; that stretch reads GRARGAD. Position 131 (Arg-131) interacts with ATP. The AMP site is built by Arg-133 and Arg-145. Arg-173 contributes to the ATP binding site.

Belongs to the adenylate kinase family. Monomer.

It is found in the cytoplasm. The catalysed reaction is AMP + ATP = 2 ADP. It participates in purine metabolism; AMP biosynthesis via salvage pathway; AMP from ADP: step 1/1. Functionally, catalyzes the reversible transfer of the terminal phosphate group between ATP and AMP. Plays an important role in cellular energy homeostasis and in adenine nucleotide metabolism. This chain is Adenylate kinase, found in Nitratiruptor sp. (strain SB155-2).